A 238-amino-acid polypeptide reads, in one-letter code: Glycerol-3-phosphate acyltransferase (238 aa).

The next 6 helical transmembrane spans lie at 5–25, 61–81, 88–108, 125–145, 149–169, and 194–214; these read VIFGSNILLILVAYFIGSINF, FLVFFLDVSKSFWFAIISAIL, FGAVITQLVVLFVIIGHVFPI, IASLNIILAIIGGIIFFAMIF, IVSLGSFITPFILVIFMIIPW, and AWYLSSLFLFLAALIILFTHI.

The protein belongs to the PlsY family. Probably interacts with PlsX.

It localises to the cell membrane. The catalysed reaction is an acyl phosphate + sn-glycerol 3-phosphate = a 1-acyl-sn-glycero-3-phosphate + phosphate. The protein operates within lipid metabolism; phospholipid metabolism. In terms of biological role, catalyzes the transfer of an acyl group from acyl-phosphate (acyl-PO(4)) to glycerol-3-phosphate (G3P) to form lysophosphatidic acid (LPA). This enzyme utilizes acyl-phosphate as fatty acyl donor, but not acyl-CoA or acyl-ACP. The sequence is that of Glycerol-3-phosphate acyltransferase from Mycoplasma mobile (strain ATCC 43663 / 163K / NCTC 11711) (Mesomycoplasma mobile).